Here is a 457-residue protein sequence, read N- to C-terminus: Ig mu chain C region (457 aa).

Positions 1–105 (SSSAPLLFPL…GEKEKKVELQ (105 aa)) are CH1. A disulfide bridge links C27 with C89. 2 N-linked (GlcNAc...) asparagine glycosylation sites follow: N45 and N113. The segment at 106–220 (VTPELPPNVS…KNVSSVCMGD (115 aa)) is CH2. Cysteines 136 and 200 form a disulfide. 3 N-linked (GlcNAc...) asparagine glycosylation sites follow: N212, N276, and N283. A CH3 region spans residues 221–326 (DTSTGISVFL…PLKQSLSRPK (106 aa)). Disulfide bonds link C248/C307 and C355/C417. Residues 327–457 (DVANDPPSVF…VLSDTASTCY (131 aa)) form a CH4 region. N-linked (GlcNAc...) asparagine glycosylation is present at N444.

The protein is Ig mu chain C region of Suncus murinus (Asian house shrew).